Consider the following 333-residue polypeptide: Anthranilate phosphoribosyltransferase (333 aa).

5-phospho-alpha-D-ribose 1-diphosphate is bound by residues G81, 84–85 (GD), T89, 91–94 (NIST), 109–117 (KHGNRSVSS), and A121. G81 is an anthranilate binding site. S93 contributes to the Mg(2+) binding site. Residue N112 coordinates anthranilate. R167 is a binding site for anthranilate. Residues D225 and E226 each coordinate Mg(2+).

Belongs to the anthranilate phosphoribosyltransferase family. In terms of assembly, homodimer. The cofactor is Mg(2+).

It catalyses the reaction N-(5-phospho-beta-D-ribosyl)anthranilate + diphosphate = 5-phospho-alpha-D-ribose 1-diphosphate + anthranilate. The protein operates within amino-acid biosynthesis; L-tryptophan biosynthesis; L-tryptophan from chorismate: step 2/5. Its function is as follows. Catalyzes the transfer of the phosphoribosyl group of 5-phosphorylribose-1-pyrophosphate (PRPP) to anthranilate to yield N-(5'-phosphoribosyl)-anthranilate (PRA). The protein is Anthranilate phosphoribosyltransferase of Haemophilus influenzae (strain 86-028NP).